The chain runs to 557 residues: Formate--tetrahydrofolate ligase (557 aa).

66 to 73 lines the ATP pocket; sequence TPAGEGKS.

This sequence belongs to the formate--tetrahydrofolate ligase family.

The enzyme catalyses (6S)-5,6,7,8-tetrahydrofolate + formate + ATP = (6R)-10-formyltetrahydrofolate + ADP + phosphate. Its pathway is one-carbon metabolism; tetrahydrofolate interconversion. In Clostridium botulinum (strain Okra / Type B1), this protein is Formate--tetrahydrofolate ligase.